A 227-amino-acid polypeptide reads, in one-letter code: 7-cyano-7-deazaguanine synthase (227 aa).

7–17 (LSGGMDSLVTT) provides a ligand contact to ATP. Zn(2+) contacts are provided by Cys-187, Cys-195, Cys-198, and Cys-201.

It belongs to the QueC family. Requires Zn(2+) as cofactor.

It catalyses the reaction 7-carboxy-7-deazaguanine + NH4(+) + ATP = 7-cyano-7-deazaguanine + ADP + phosphate + H2O + H(+). It participates in purine metabolism; 7-cyano-7-deazaguanine biosynthesis. Catalyzes the ATP-dependent conversion of 7-carboxy-7-deazaguanine (CDG) to 7-cyano-7-deazaguanine (preQ(0)). The sequence is that of 7-cyano-7-deazaguanine synthase from Chlorobium phaeovibrioides (strain DSM 265 / 1930) (Prosthecochloris vibrioformis (strain DSM 265)).